Here is a 301-residue protein sequence, read N- to C-terminus: uncharacterized protein (301 aa).

A divalent metal cation is bound by residues Glu146, Glu148, and Asp177.

Belongs to the FAH family.

This is an uncharacterized protein from Staphylococcus epidermidis (strain ATCC 12228 / FDA PCI 1200).